Reading from the N-terminus, the 320-residue chain is Probable serine proteinase inhibitor 1 (320 aa).

This sequence belongs to the serpin family. Poxviruses subfamily.

This is Probable serine proteinase inhibitor 1 (SPI-1) from Swinepox virus (strain Kasza) (SWPV).